A 256-amino-acid polypeptide reads, in one-letter code: Myeloblastin (256 aa).

The first 25 residues, 1-25 (MAHRPPSPALASVLLALLLSGAARA), serve as a signal peptide directing secretion. Positions 26–27 (AE) are excised as a propeptide. Positions 28–248 (IVGGHEAQPH…YVDWIRSTLR (221 aa)) constitute a Peptidase S1 domain. Cys56 and Cys72 are joined by a disulfide. Active-site charge relay system residues include His71 and Asp118. Asn129 and Asn174 each carry an N-linked (GlcNAc...) asparagine glycan. Disulfide bonds link Cys152-Cys209, Cys182-Cys188, and Cys199-Cys224. Catalysis depends on Ser203, which acts as the Charge relay system. Positions 249 to 256 (RVEAKGRP) are excised as a propeptide.

The protein belongs to the peptidase S1 family. Elastase subfamily. In terms of assembly, may form dimers. Interacts with CD177; the interaction tethers PRTN3 to the cell surface; the interaction is direct. Interacts with SERPINB1. Interacts with ADGRG3. As to expression, expressed in polymorphonuclear leukocytes (at protein level). Expressed in neutrophils (at protein level). Expressed in differentiating neutrophils.

The protein localises to the cytoplasmic granule. The protein resides in the secreted. Its subcellular location is the cell membrane. It localises to the membrane raft. The enzyme catalyses Hydrolysis of proteins, including elastin, by preferential cleavage: -Ala-|-Xaa- &gt; -Val-|-Xaa-.. Its activity is regulated as follows. Inhibited by phenylmethanesulfonyl fluoride (PMSF) and diisopropyl fluorophosphate (DFP). Its function is as follows. Serine protease that degrades elastin, fibronectin, laminin, vitronectin, and collagen types I, III, and IV (in vitro). By cleaving and activating receptor F2RL1/PAR-2, enhances endothelial cell barrier function and thus vascular integrity during neutrophil transendothelial migration. Plays a role in neutrophil transendothelial migration, probably when associated with CD177. Triggers inflammatory processes in neutrophils by interacting with ADGRG3 upstream of F2RL1/PAR2 activation. The chain is Myeloblastin (PRTN3) from Homo sapiens (Human).